Here is a 380-residue protein sequence, read N- to C-terminus: Protein Wnt-5a (380 aa).

The signal sequence occupies residues 1–35 (MKKSIGILSPGVALGTAGSAMSSKFFVMALAVFFS). Residues 36–61 (FAQVVIEANSWWSLGMNNPVQMSEVY) constitute a propeptide that is removed on maturation. C104 and C115 are disulfide-bonded. N-linked (GlcNAc...) asparagine glycosylation is found at N114 and N120. 10 disulfide bridges follow: C154–C162, C164–C182, C238–C252, C240–C247, C309–C340, C325–C335, C339–C379, C355–C370, C357–C367, and C362–C363. S244 carries the O-palmitoleoyl serine; by PORCN lipid modification. N-linked (GlcNAc...) asparagine glycans are attached at residues N312 and N326.

This sequence belongs to the Wnt family. Forms a soluble 1:1 complex with AFM; this prevents oligomerization and is required for prolonged biological activity. The complex with AFM may represent the physiological form in body fluids. Homooligomer; disulfide-linked, leading to inactivation (in vitro). Interacts with PORCN. Interacts with WLS. Interacts with glypican GCP3. Interacts with PKD1 (via extracellular domain). Interacts with TMEM67. In terms of processing, glycosylation is necessary for secretion but not for activity. Post-translationally, palmitoleoylation is required for efficient binding to frizzled receptors. Depalmitoleoylation leads to Wnt signaling pathway inhibition. Proteolytic processing by TIKI1 and TIKI2 promotes oxidation and formation of large disulfide-bond oligomers, leading to inactivation of WNT5A.

It is found in the secreted. Its subcellular location is the extracellular space. The protein resides in the extracellular matrix. Ligand for members of the frizzled family of seven transmembrane receptors. Can activate or inhibit canonical Wnt signaling, depending on receptor context. In the presence of FZD4, activates beta-catenin signaling. In the presence of ROR2, inhibits the canonical Wnt pathway by promoting beta-catenin degradation through a GSK3-independent pathway which involves down-regulation of beta-catenin-induced reporter gene expression. Suppression of the canonical pathway allows chondrogenesis to occur. Inhibits tumor formation. Stimulates cell migration. Decreases proliferation, migration, invasiveness and clonogenicity of carcinoma cells and may act as a tumor suppressor. Mediates motility of melanoma cells. Required during embryogenesis for extension of the primary anterior-posterior axis and for outgrowth of limbs and the genital tubercle. Inhibits type II collagen expression in chondrocytes. This is Protein Wnt-5a from Oryctolagus cuniculus (Rabbit).